The following is a 643-amino-acid chain: Pescadillo homolog (643 aa).

The region spanning 319–412 is the BRCT domain; sequence KLKTLFKGLK…RLLPTNKYFM (94 aa). Disordered stretches follow at residues 437–475, 492–571, and 609–643; these read AARKAAEGEEEEETFEPAEVNADHEHISDDEEVQDPENE, TDSL…YREN, and DKNARLLANKRERIEKQKRAEQMEKQKQQRKQILA. Positions 464 to 475 are enriched in acidic residues; that stretch reads SDDEEVQDPENE. A compositionally biased stretch (basic and acidic residues) spans 492-518; sequence TDSLNSGKKEGADDATDNGKDAAEKKQ. Residues 524–544 show a composition bias toward acidic residues; sequence GESDDEDEEEEDDDDGEEEED. A coiled-coil region spans residues 569–643; the sequence is RENEAEKKIV…QKQQRKQILA (75 aa). The segment covering 609–635 has biased composition (basic and acidic residues); sequence DKNARLLANKRERIEKQKRAEQMEKQK.

It belongs to the pescadillo family.

Its subcellular location is the nucleus. The protein resides in the nucleolus. The protein localises to the nucleoplasm. Required for maturation of ribosomal RNAs and formation of the large ribosomal subunit. The polypeptide is Pescadillo homolog (Anopheles gambiae (African malaria mosquito)).